Here is a 352-residue protein sequence, read N- to C-terminus: Quinolinate synthase (352 aa).

Iminosuccinate-binding residues include His-48 and Ser-69. Residue Cys-114 coordinates [4Fe-4S] cluster. Iminosuccinate is bound by residues 140 to 142 (YAN) and Ser-157. Cys-201 lines the [4Fe-4S] cluster pocket. Iminosuccinate-binding positions include 227–229 (HPE) and Thr-244. Cys-298 provides a ligand contact to [4Fe-4S] cluster.

The protein belongs to the quinolinate synthase family. Type 1 subfamily. The cofactor is [4Fe-4S] cluster.

It localises to the cytoplasm. The enzyme catalyses iminosuccinate + dihydroxyacetone phosphate = quinolinate + phosphate + 2 H2O + H(+). It participates in cofactor biosynthesis; NAD(+) biosynthesis; quinolinate from iminoaspartate: step 1/1. Functionally, catalyzes the condensation of iminoaspartate with dihydroxyacetone phosphate to form quinolinate. In Pseudomonas syringae pv. tomato (strain ATCC BAA-871 / DC3000), this protein is Quinolinate synthase.